Reading from the N-terminus, the 303-residue chain is MSDAGGGKKPPVDPQAGPGPGPGRAAGERGLSGSFPLVLKKLMENPPREARLDKEKGKEKLEEDEAAAASTMAVSASLMPPIWDKTIPYDGESFHLEYMDLDEFLLENGIPASPTHLAHNLLLPVAELEGKESASSSTASPPSSSTAIFQPSETVSSTESSLEKERETPSPIDPNCVEVDVNFNPDPADLVLSSVPGGELFNPRKHKFAEEDLKPQPMIKKAKKVFVPDEQKDEKYWTRRKKNNVAAKRSRDARRLKENQITIRAAFLEKENTALRTEVAELRKEVGKCKTIVSKYETKYGPL.

Disordered stretches follow at residues 1 to 63 (MSDA…KLEE) and 132 to 176 (ESAS…DPNC). Position 32 is a phosphoserine (serine 32). Over residues 41–61 (KLMENPPREARLDKEKGKEKL) the composition is skewed to basic and acidic residues. Residues 133 to 160 (SASSSTASPPSSSTAIFQPSETVSSTES) show a composition bias toward low complexity. The region spanning 233–296 (DEKYWTRRKK…GKCKTIVSKY (64 aa)) is the bZIP domain. The tract at residues 235 to 255 (KYWTRRKKNNVAAKRSRDARR) is basic motif. A leucine-zipper region spans residues 256-263 (LKENQITI).

Belongs to the bZIP family. PAR subfamily. As to quaternary structure, binds DNA as a homodimer or a heterodimer. Can form a heterodimer with DBP.

The protein localises to the nucleus. Functionally, transcription factor that binds to and transactivates the TSHB promoter. Binds to a minimal DNA-binding sequence 5'-[TC][AG][AG]TTA[TC][AG]-3'. In Homo sapiens (Human), this protein is Thyrotroph embryonic factor (TEF).